Here is a 612-residue protein sequence, read N- to C-terminus: Zinc metalloproteinase-disintegrin-like berythractivase (612 aa).

The first 20 residues, 1–20 (MIQVLLVIICLEAFPYQGSS), serve as a signal peptide directing secretion. The propeptide occupies 21-187 (IILESGNVND…EPIKKASLLN (167 aa)). One can recognise a Peptidase M12B domain in the interval 200-396 (KYVEFVVVLD…NRPQCLLNKP (197 aa)). Glutamate 203 lines the Ca(2+) pocket. Asparagine 260 carries an N-linked (GlcNAc...) asparagine glycan. Ca(2+) is bound at residue aspartate 287. Cystine bridges form between cysteine 311–cysteine 391, cysteine 351–cysteine 375, and cysteine 353–cysteine 358. Histidine 336 provides a ligand contact to Zn(2+). Glutamate 337 is a catalytic residue. The Zn(2+) site is built by histidine 340 and histidine 346. Asparagine 348 carries an N-linked (GlcNAc...) asparagine glycan. Asparagine 374 is a glycosylation site (N-linked (GlcNAc...) asparagine). 8 residues coordinate Ca(2+): cysteine 391, asparagine 394, valine 406, asparagine 409, leucine 411, glutamate 413, glutamate 416, and aspartate 419. The Disintegrin domain maps to 404-490 (PPVCGNELLE…DCPMDDFQRN (87 aa)). Cystine bridges form between cysteine 407-cysteine 436, cysteine 418-cysteine 431, cysteine 420-cysteine 426, cysteine 430-cysteine 453, cysteine 444-cysteine 450, cysteine 449-cysteine 475, cysteine 462-cysteine 482, cysteine 469-cysteine 501, cysteine 494-cysteine 506, cysteine 513-cysteine 563, cysteine 528-cysteine 574, cysteine 541-cysteine 551, cysteine 558-cysteine 600, and cysteine 594-cysteine 605. Asparagine 432 carries N-linked (GlcNAc...) asparagine glycosylation. The D/ECD-tripeptide signature appears at 468–470 (DCD). Residues aspartate 470, leucine 471, glutamate 473, and aspartate 485 each contribute to the Ca(2+) site.

It belongs to the venom metalloproteinase (M12B) family. P-III subfamily. P-IIIa sub-subfamily. As to quaternary structure, monomer. Zn(2+) serves as cofactor. In terms of processing, highly glycosylated. In terms of tissue distribution, expressed by the venom gland.

The protein resides in the secreted. Its activity is regulated as follows. Inhibited by EDTA and o-phenanthroline. Not inhibited by PMSF, benzamidine, irreversible serine-proteinase inhibitors and cysteine proteinase inhibitor E-64. In terms of biological role, potent activator of prothrombin (F2). Does not elicit any hemorrhagic response. Barely inhibits collagen-induced platelet aggregation. Binds neither collagen, nor the jararhagin monoclonal antibody MAJar3. Hydrolyzes the Aalpha-chain of fibrin and fibrinogen, without affecting the Bbeta- and gamma-chains. Is capable of triggering endothelial pro-inflammatory and procoagulant cell responses, but fails to trigger apoptosis. Induces von Willebrand factor release, and the expression of both ICAM1 and E-selectin (SELE) (without increase in VCAM1) in endothelial cells (HUVEC). Is also able to up-regulate the synthesis of the coagulation factor TF (F3). Enhances nitric oxide (NO) generation, prostacyclin production and interleukin-8 release. In Bothrops erythromelas (Caatinga lance head), this protein is Zinc metalloproteinase-disintegrin-like berythractivase.